We begin with the raw amino-acid sequence, 86 residues long: Defensin-like protein 259 (86 aa).

A signal peptide spans 1 to 25 (MKNASLKLPLLIFILVITSNLGAEA). Cystine bridges form between Cys-60–Cys-76, Cys-66–Cys-83, and Cys-70–Cys-85.

The protein belongs to the DEFL family.

The protein resides in the secreted. This is Defensin-like protein 259 from Arabidopsis thaliana (Mouse-ear cress).